The following is a 129-amino-acid chain: Transcription antitermination protein NusB (129 aa).

The protein belongs to the NusB family.

Its function is as follows. Involved in transcription antitermination. Required for transcription of ribosomal RNA (rRNA) genes. Binds specifically to the boxA antiterminator sequence of the ribosomal RNA (rrn) operons. The polypeptide is Transcription antitermination protein NusB (Staphylococcus aureus (strain bovine RF122 / ET3-1)).